The following is a 326-amino-acid chain: Lipoyl synthase (326 aa).

[4Fe-4S] cluster contacts are provided by cysteine 74, cysteine 79, cysteine 85, cysteine 100, cysteine 104, cysteine 107, and serine 314. Residues 85–303 enclose the Radical SAM core domain; the sequence is CFGKGTATFM…EEEAYKMGFT (219 aa).

This sequence belongs to the radical SAM superfamily. Lipoyl synthase family. Requires [4Fe-4S] cluster as cofactor.

The protein localises to the cytoplasm. The catalysed reaction is [[Fe-S] cluster scaffold protein carrying a second [4Fe-4S](2+) cluster] + N(6)-octanoyl-L-lysyl-[protein] + 2 oxidized [2Fe-2S]-[ferredoxin] + 2 S-adenosyl-L-methionine + 4 H(+) = [[Fe-S] cluster scaffold protein] + N(6)-[(R)-dihydrolipoyl]-L-lysyl-[protein] + 4 Fe(3+) + 2 hydrogen sulfide + 2 5'-deoxyadenosine + 2 L-methionine + 2 reduced [2Fe-2S]-[ferredoxin]. The protein operates within protein modification; protein lipoylation via endogenous pathway; protein N(6)-(lipoyl)lysine from octanoyl-[acyl-carrier-protein]: step 2/2. In terms of biological role, catalyzes the radical-mediated insertion of two sulfur atoms into the C-6 and C-8 positions of the octanoyl moiety bound to the lipoyl domains of lipoate-dependent enzymes, thereby converting the octanoylated domains into lipoylated derivatives. The protein is Lipoyl synthase of Delftia acidovorans (strain DSM 14801 / SPH-1).